A 142-amino-acid chain; its full sequence is Relaxin-3 (142 aa).

Positions 1-25 (MARYMLLLLLAVWVLTGELWPGAEA) are cleaved as a signal peptide. Intrachain disulfides connect C35–C129, C47–C142, and C128–C133. Positions 55–118 (SDILAHEAMG…GTPGVLRGSR (64 aa)) are cleaved as a propeptide — connecting peptide.

Belongs to the insulin family. Heterodimer of a B chain and an A chain linked by two disulfide bonds.

Its subcellular location is the secreted. In terms of biological role, may play a role in neuropeptide signaling processes. Ligand for LGR7, RXFP3 and RXFP4. This Homo sapiens (Human) protein is Relaxin-3 (RLN3).